Reading from the N-terminus, the 852-residue chain is Disks large homolog 2 (852 aa).

Residues C5 and C7 are each lipidated (S-palmitoyl cysteine). S28 carries the post-translational modification Phosphoserine. A Phosphotyrosine modification is found at Y58. S65 is subject to Phosphoserine. PDZ domains lie at 98-185 and 193-280; these read EITL…RRRR and EIKL…GKPT. 6 positions are modified to phosphoserine: S307, S328, S360, S365, S406, and S414. Residues 421–502 enclose the PDZ 3 domain; it reads KVVLHKGSTG…TVTIIAQYQP (82 aa). Residue Y505 is modified to Phosphotyrosine. A phosphoserine mark is found at S528, S530, and S553. Residues 536–606 enclose the SH3 domain; sequence KRSLYVRAMF…PSKRRVERKE (71 aa). The 176-residue stretch at 662–837 folds into the Guanylate kinase-like domain; that stretch reads TRPVIILGPM…IYNQCKLVIE (176 aa). Residues Y732 and Y737 each carry the phosphotyrosine modification.

In terms of assembly, interacts with NOS1/nNOS through second PDZ domain. Interacts with KCNJ2/Kir2.1 (via C-terminus) through one of its PDZ domains. Interacts with KCNJ4. Interacts with FRMPD4 (via C-terminus). Interacts through its PDZ domains with NETO1. Interacts with LRFN1, LRFN2 and LRFN4. Interacts with FASLG. Interacts with KCNJ4. Interacts with ADAM22. Interacts with DGKI (via PDZ-binding motif). In terms of processing, palmitoylation of isoform 1 and isoform 2 is not required for targeting to postsynaptic density. As to expression, brain. Highest levels of isoform 1 in cortex, olfactory bulb, thalamus, hypothalamus, striatum and hippocampus. Highest level of isoform 2 in olfactory bulb. Reduced levels in cortex and hippocampus. Highest level of isoform 4 in spinal cord. Low levels of isoform 4, isoform 6, and isoform 7 in superior cervical ganglion.

It is found in the cell membrane. The protein localises to the postsynaptic density. It localises to the synapse. The protein resides in the membrane. Its subcellular location is the cell projection. It is found in the axon. The protein localises to the perikaryon. In terms of biological role, required for perception of chronic pain through NMDA receptor signaling. Regulates surface expression of NMDA receptors in dorsal horn neurons of the spinal cord. Interacts with the cytoplasmic tail of NMDA receptor subunits as well as inward rectifying potassium channels. Involved in regulation of synaptic stability at cholinergic synapses. Part of the postsynaptic protein scaffold of excitatory synapses. In Mus musculus (Mouse), this protein is Disks large homolog 2 (Dlg2).